The primary structure comprises 502 residues: Lysine--tRNA ligase (502 aa).

2 residues coordinate Mg(2+): glutamate 413 and glutamate 420.

It belongs to the class-II aminoacyl-tRNA synthetase family. In terms of assembly, homodimer. Mg(2+) serves as cofactor.

The protein localises to the cytoplasm. It carries out the reaction tRNA(Lys) + L-lysine + ATP = L-lysyl-tRNA(Lys) + AMP + diphosphate. The polypeptide is Lysine--tRNA ligase (lysS) (Haemophilus influenzae (strain ATCC 51907 / DSM 11121 / KW20 / Rd)).